A 269-amino-acid chain; its full sequence is Tryptophan synthase alpha chain (269 aa).

Active-site proton acceptor residues include Glu50 and Asp61.

The protein belongs to the TrpA family. In terms of assembly, tetramer of two alpha and two beta chains.

It carries out the reaction (1S,2R)-1-C-(indol-3-yl)glycerol 3-phosphate + L-serine = D-glyceraldehyde 3-phosphate + L-tryptophan + H2O. Its pathway is amino-acid biosynthesis; L-tryptophan biosynthesis; L-tryptophan from chorismate: step 5/5. Functionally, the alpha subunit is responsible for the aldol cleavage of indoleglycerol phosphate to indole and glyceraldehyde 3-phosphate. The protein is Tryptophan synthase alpha chain of Francisella tularensis subsp. holarctica (strain FTNF002-00 / FTA).